Reading from the N-terminus, the 157-residue chain is Electron transfer flavoprotein regulatory factor 1 homolog (157 aa).

It belongs to the complex I LYR family.

It is found in the mitochondrion. The chain is Electron transfer flavoprotein regulatory factor 1 homolog from Dictyostelium discoideum (Social amoeba).